The following is a 419-amino-acid chain: Zinc finger CCCH domain-containing protein 62 (419 aa).

The C3H1-type zinc-finger motif lies at 89–116 (SLRKWVCKYWKDGKCKRGEQCQFLHSWS). WD repeat units follow at residues 129 to 168 (GHNK…CVHS), 210 to 247 (GVVG…ESDP), 256 to 293 (GHSG…CIMT), 296 to 335 (QHTG…KVVQ), and 383 to 419 (FSTH…GNKV).

This Arabidopsis thaliana (Mouse-ear cress) protein is Zinc finger CCCH domain-containing protein 62 (ZFWD4).